A 153-amino-acid polypeptide reads, in one-letter code: Nascent polypeptide-associated complex subunit beta (153 aa).

2 disordered regions span residues 1–40 (MSDVQERLKKLGLGARTGTGKGTPRRKVKRAPARSGADDK) and 126–153 (LQKEKGEDDDEIPDLVEGENFEGEPKVE). Residues 23–32 (TPRRKVKRAP) are compositionally biased toward basic residues. Residues 36-101 (GADDKKLQLA…GEDKELTELV (66 aa)) form the NAC-A/B domain. Residues 132–147 (EDDDEIPDLVEGENFE) are compositionally biased toward acidic residues.

It belongs to the NAC-beta family. As to quaternary structure, part of the nascent polypeptide-associated complex (NAC), consisting of EGD2 and EGD1. NAC associates with ribosomes via EGD1.

It is found in the cytoplasm. The protein localises to the nucleus. Functionally, component of the nascent polypeptide-associated complex (NAC), a dynamic component of the ribosomal exit tunnel, protecting the emerging polypeptides from interaction with other cytoplasmic proteins to ensure appropriate nascent protein targeting. The NAC complex also promotes mitochondrial protein import by enhancing productive ribosome interactions with the outer mitochondrial membrane and blocks the inappropriate interaction of ribosomes translating non-secretory nascent polypeptides with translocation sites in the membrane of the endoplasmic reticulum. EGD1 may act as a transcription factor that exert a negative effect on the expression of several genes that are transcribed by RNA polymerase II. The chain is Nascent polypeptide-associated complex subunit beta (EGD1) from Gibberella zeae (strain ATCC MYA-4620 / CBS 123657 / FGSC 9075 / NRRL 31084 / PH-1) (Wheat head blight fungus).